Here is a 515-residue protein sequence, read N- to C-terminus: Glucose-6-phosphate 1-dehydrogenase (515 aa).

An N-acetylalanine modification is found at Ala2. A Phosphoserine modification is found at Ser8. The residue at position 10 (Thr10) is a Phosphothreonine. 38–45 (GASGDLAK) provides a ligand contact to NADP(+). Position 89 is an N6-acetyllysine (Lys89). Tyr147 and Lys171 together coordinate NADP(+). Residues Lys171, 201–205 (HYLGK), Glu239, and Glu258 each bind D-glucose 6-phosphate. At Lys171 the chain carries N6-(2-hydroxyisobutyryl)lysine; alternate. Lys171 is modified (N6-acetyllysine; alternate). Arg357 serves as a coordination point for NADP(+). The D-glucose 6-phosphate site is built by Lys360 and Arg365. NADP(+) contacts are provided by Lys366, Arg370, and Arg393. Gln395 lines the D-glucose 6-phosphate pocket. Residues 401–403 (YTK) and 421–423 (DLT) each bind NADP(+). At Lys403 the chain carries N6-acetyllysine. Lys432 carries the N6-acetyllysine modification. Arg487 serves as a coordination point for NADP(+). Lys497 is subject to N6-acetyllysine. NADP(+) is bound by residues Tyr503 and Trp509. Position 503 is a phosphotyrosine (Tyr503).

It belongs to the glucose-6-phosphate dehydrogenase family. Homotetramer; dimer of dimers. Interacts with SIRT2; the interaction is enhanced by H(2)O(2) treatment. Forms a ternary complex with ALDOB and TP53; this interaction is direct. ALDOB stabilizes the complex inhibiting G6PD activity and keeping oxidative pentose phosphate metabolism in check. In terms of processing, acetylated by ELP3 at Lys-403; acetylation inhibits its homodimerization and enzyme activity. Deacetylated by SIRT2 at Lys-403; deacetylation stimulates its enzyme activity.

It localises to the cytoplasm. It is found in the cytosol. The protein resides in the membrane. It catalyses the reaction D-glucose 6-phosphate + NADP(+) = 6-phospho-D-glucono-1,5-lactone + NADPH + H(+). Its pathway is carbohydrate degradation; pentose phosphate pathway; D-ribulose 5-phosphate from D-glucose 6-phosphate (oxidative stage): step 1/3. Cytosolic glucose-6-phosphate dehydrogenase that catalyzes the first and rate-limiting step of the oxidative branch within the pentose phosphate pathway/shunt, an alternative route to glycolysis for the dissimilation of carbohydrates and a major source of reducing power and metabolic intermediates for fatty acid and nucleic acid biosynthetic processes. The sequence is that of Glucose-6-phosphate 1-dehydrogenase (G6PD) from Bos indicus (Zebu).